The chain runs to 207 residues: Thiamine-phosphate synthase (207 aa).

Residues 35–39 (QYRDK) and asparagine 67 each bind 4-amino-2-methyl-5-(diphosphooxymethyl)pyrimidine. Mg(2+) contacts are provided by aspartate 68 and aspartate 86. 4-amino-2-methyl-5-(diphosphooxymethyl)pyrimidine is bound at residue threonine 105. Residue 132–134 (SNT) participates in 2-[(2R,5Z)-2-carboxy-4-methylthiazol-5(2H)-ylidene]ethyl phosphate binding. Lysine 135 serves as a coordination point for 4-amino-2-methyl-5-(diphosphooxymethyl)pyrimidine. Glycine 162 lines the 2-[(2R,5Z)-2-carboxy-4-methylthiazol-5(2H)-ylidene]ethyl phosphate pocket.

It belongs to the thiamine-phosphate synthase family. It depends on Mg(2+) as a cofactor.

It catalyses the reaction 2-[(2R,5Z)-2-carboxy-4-methylthiazol-5(2H)-ylidene]ethyl phosphate + 4-amino-2-methyl-5-(diphosphooxymethyl)pyrimidine + 2 H(+) = thiamine phosphate + CO2 + diphosphate. The enzyme catalyses 2-(2-carboxy-4-methylthiazol-5-yl)ethyl phosphate + 4-amino-2-methyl-5-(diphosphooxymethyl)pyrimidine + 2 H(+) = thiamine phosphate + CO2 + diphosphate. It carries out the reaction 4-methyl-5-(2-phosphooxyethyl)-thiazole + 4-amino-2-methyl-5-(diphosphooxymethyl)pyrimidine + H(+) = thiamine phosphate + diphosphate. It participates in cofactor biosynthesis; thiamine diphosphate biosynthesis; thiamine phosphate from 4-amino-2-methyl-5-diphosphomethylpyrimidine and 4-methyl-5-(2-phosphoethyl)-thiazole: step 1/1. In terms of biological role, condenses 4-methyl-5-(beta-hydroxyethyl)thiazole monophosphate (THZ-P) and 2-methyl-4-amino-5-hydroxymethyl pyrimidine pyrophosphate (HMP-PP) to form thiamine monophosphate (TMP). The polypeptide is Thiamine-phosphate synthase (Pseudomonas fluorescens (strain Pf0-1)).